A 266-amino-acid chain; its full sequence is Short-chain dehydrogenase/reductase AacuF (266 aa).

NADP(+)-binding residues include leucine 13, aspartate 57, and asparagine 85. Catalysis depends on proton donor residues serine 145 and tyrosine 164. The NADP(+) site is built by tyrosine 164, lysine 168, and valine 198. Lysine 168 functions as the Lowers pKa of active site Tyr in the catalytic mechanism.

The protein belongs to the short-chain dehydrogenases/reductases (SDR) family.

It participates in secondary metabolite biosynthesis. Short-chain dehydrogenase/reductase; part of the gene cluster that mediates the biosynthesis of the tetrahydroxanthone dimer secalonic acid D. The pathway begins with the synthesis of atrochrysone thioester by the polyketide synthase AacuL. The atrochrysone carboxyl ACP thioesterase AacuM then breaks the thioester bond and releases the atrochrysone carboxylic acid from AacuL. Atrochrysone carboxylic acid is decarboxylated by the decarboxylase AacuI, and oxidized by the anthrone oxygenase AacuG to yield emodin. Emodin is then reduced to emodin hydroquinone by a yet unidentified oxidoreductase. A-ring reduction by the short chain dehydrogenase AacuN, dehydration by the scytalone dehydratase-like protein AacuK and probable spontaneous re-oxidation, results in overall deoxygenation to chrysophanol. Baeyer-Villiger oxidation by the Baeyer-Villiger monooxygenase (BVMO) AacuH then yields monodictyphenone. Monodictyphenone is transformed into compounds with the tetrahydroxanthone skeleton via methylesterification by the methyltransferase AacuQ, followed by the action of the flavin-dependent monooxygenase AacuC, the isomerase AacuP, and the short chain dehydrogenase/reductase AacuF or AacuD. AacuF and AacuD should accept the same compound as a substrate but perform the ketoreduction with a different stereoselectivity, thus yielding blennolides B and A, respectively. In the final step of the biosynthesis, the cytochrome P450 monooxygenase AacuE accepts blennolide B and/or blennolide A to conduct the dimerization reaction to furnish the tetrahydroxanthone dimers, secalonic acids D, B, and F. The sequence is that of Short-chain dehydrogenase/reductase AacuF from Aspergillus aculeatus (strain ATCC 16872 / CBS 172.66 / WB 5094).